The sequence spans 354 residues: Peptide chain release factor 1 (354 aa).

The residue at position 230 (Gln-230) is an N5-methylglutamine.

The protein belongs to the prokaryotic/mitochondrial release factor family. Methylated by PrmC. Methylation increases the termination efficiency of RF1.

Its subcellular location is the cytoplasm. Its function is as follows. Peptide chain release factor 1 directs the termination of translation in response to the peptide chain termination codons UAG and UAA. The chain is Peptide chain release factor 1 from Pelobacter propionicus (strain DSM 2379 / NBRC 103807 / OttBd1).